We begin with the raw amino-acid sequence, 540 residues long: Synaptotagmin-3 (540 aa).

Residues 9-29 (GIIGFVIGIPIGLILGFFVLI) form a helical membrane-spanning segment. In terms of domain architecture, SMP-LTD spans 67-249 (DYERVDWFNK…WPQVLEIPIL (183 aa)). A phospholipid binding region spans residues 227–509 (QETIKRQVSS…ELGHVDINLD (283 aa)). C2 domains lie at 240–363 (WPQV…EFNL) and 401–521 (RKES…NQKY). 5 residues coordinate Ca(2+): aspartate 277, aspartate 283, aspartate 333, aspartate 335, and aspartate 341.

The protein belongs to the synaptotagmin family. Ca(2+) serves as cofactor.

The protein resides in the membrane. Its function is as follows. May be involved in membrane trafficking. In Arabidopsis thaliana (Mouse-ear cress), this protein is Synaptotagmin-3 (SYT3).